The sequence spans 355 residues: Putative GPI-anchor transamidase (355 aa).

Residues 1-24 (MFNIMLVKFVVIFALILASCRVEA) form the signal peptide. Catalysis depends on residues H165 and C207.

This sequence belongs to the peptidase C13 family.

The protein operates within glycolipid biosynthesis; glycosylphosphatidylinositol-anchor biosynthesis. In terms of biological role, mediates GPI anchoring in the endoplasmic reticulum, by replacing a protein's C-terminal GPI attachment signal peptide with a pre-assembled GPI. During this transamidation reaction, the GPI transamidase forms a carbonyl intermediate with the substrate protein. The protein is Putative GPI-anchor transamidase of Drosophila melanogaster (Fruit fly).